The sequence spans 251 residues: 3-deoxy-manno-octulosonate cytidylyltransferase (251 aa).

The protein belongs to the KdsB family.

It is found in the cytoplasm. The enzyme catalyses 3-deoxy-alpha-D-manno-oct-2-ulosonate + CTP = CMP-3-deoxy-beta-D-manno-octulosonate + diphosphate. Its pathway is nucleotide-sugar biosynthesis; CMP-3-deoxy-D-manno-octulosonate biosynthesis; CMP-3-deoxy-D-manno-octulosonate from 3-deoxy-D-manno-octulosonate and CTP: step 1/1. It functions in the pathway bacterial outer membrane biogenesis; lipopolysaccharide biosynthesis. Activates KDO (a required 8-carbon sugar) for incorporation into bacterial lipopolysaccharide in Gram-negative bacteria. In Vibrio vulnificus (strain YJ016), this protein is 3-deoxy-manno-octulosonate cytidylyltransferase.